The primary structure comprises 364 residues: MNRATATINVTALKHNLSQIKALAPKSLAWVMIKSNGYGHGLVRVAKALSDANAFGVACIDEALTLREVGIKSPIIVMKGFYNEAELSQFARHRLGAVIHCSDQVSLLEKTNLTSSLSVWLKIDTGMNRLGFSVEQSPAVYNQLKTSSSIQKPIGLMTHLADADNENKTFTELQIKRFFSVTEKMIGPKSIVNSAGFFAYPNALVDWIRPGIILYGISPFGINYNSFKEKIEKKFRPVMTLSAKIIAIKNRRQNDSVGYGCTWSCPEDMPIAIVSIGYGDGYPRHAPSGTPVLLNGKICPLIGRVSMDMIAIDLRSQPNAQVGDDVILWGEGLPVEIIAEKAGTIAYELLCKITQRVQFIEIEK.

K34 serves as the catalytic Proton acceptor; specific for D-alanine. Residue K34 is modified to N6-(pyridoxal phosphate)lysine. R129 contacts substrate. Y259 serves as the catalytic Proton acceptor; specific for L-alanine. M307 is a substrate binding site.

Belongs to the alanine racemase family. Pyridoxal 5'-phosphate is required as a cofactor.

It carries out the reaction L-alanine = D-alanine. It functions in the pathway amino-acid biosynthesis; D-alanine biosynthesis; D-alanine from L-alanine: step 1/1. In terms of biological role, catalyzes the interconversion of L-alanine and D-alanine. May also act on other amino acids. This Coxiella burnetii (strain Dugway 5J108-111) protein is Alanine racemase (alr).